The primary structure comprises 193 residues: Phosphoheptose isomerase (193 aa).

Residues leucine 37–alanine 193 form the SIS domain. Asparagine 52–glycine 54 serves as a coordination point for substrate. Residues histidine 61 and glutamate 65 each contribute to the Zn(2+) site. Residues glutamate 65, asparagine 93–aspartate 94, serine 119–serine 121, serine 124, and glutamine 172 contribute to the substrate site. The Zn(2+) site is built by glutamine 172 and histidine 180.

This sequence belongs to the SIS family. GmhA subfamily. In terms of assembly, homotetramer. Zn(2+) serves as cofactor.

It is found in the cytoplasm. The enzyme catalyses 2 D-sedoheptulose 7-phosphate = D-glycero-alpha-D-manno-heptose 7-phosphate + D-glycero-beta-D-manno-heptose 7-phosphate. It functions in the pathway carbohydrate biosynthesis; D-glycero-D-manno-heptose 7-phosphate biosynthesis; D-glycero-alpha-D-manno-heptose 7-phosphate and D-glycero-beta-D-manno-heptose 7-phosphate from sedoheptulose 7-phosphate: step 1/1. Its pathway is bacterial outer membrane biogenesis; LPS core biosynthesis. Catalyzes the isomerization of sedoheptulose 7-phosphate in D-glycero-D-manno-heptose 7-phosphate. This is Phosphoheptose isomerase from Yersinia pestis.